The chain runs to 354 residues: Protein-arginine kinase (354 aa).

Residues 24-254 (IVLSSRIRLA…QQIIQQEKMA (231 aa)) form the Phosphagen kinase C-terminal domain. ATP contacts are provided by residues 27–31 (SSRIR), His92, Arg125, 176–180 (RASVM), and 207–212 (RGIYGE). The RDXXRA motif of the pArg binding pocket involved in allosteric regulation signature appears at 337-342 (RDYRRA).

The protein belongs to the ATP:guanido phosphotransferase family.

It carries out the reaction L-arginyl-[protein] + ATP = N(omega)-phospho-L-arginyl-[protein] + ADP + H(+). Appears to be allosterically activated by the binding of pArg-containing polypeptides to the pArg-binding pocket localized in the C-terminal domain of McsB. Its function is as follows. Catalyzes the specific phosphorylation of arginine residues in a large number of proteins. Is part of the bacterial stress response system. Protein arginine phosphorylation has a physiologically important role and is involved in the regulation of many critical cellular processes, such as protein homeostasis, motility, competence, and stringent and stress responses, by regulating gene expression and protein activity. This Bacillus cereus (strain G9842) protein is Protein-arginine kinase.